Here is a 302-residue protein sequence, read N- to C-terminus: 33 kDa chaperonin (302 aa).

2 disulfides stabilise this stretch: cysteine 234/cysteine 236 and cysteine 267/cysteine 270.

It belongs to the HSP33 family. In terms of processing, under oxidizing conditions two disulfide bonds are formed involving the reactive cysteines. Under reducing conditions zinc is bound to the reactive cysteines and the protein is inactive.

It is found in the cytoplasm. Its function is as follows. Redox regulated molecular chaperone. Protects both thermally unfolding and oxidatively damaged proteins from irreversible aggregation. Plays an important role in the bacterial defense system toward oxidative stress. The sequence is that of 33 kDa chaperonin from Neisseria meningitidis serogroup A / serotype 4A (strain DSM 15465 / Z2491).